Reading from the N-terminus, the 104-residue chain is Small ribosomal subunit protein uS10 (104 aa).

It belongs to the universal ribosomal protein uS10 family. As to quaternary structure, part of the 30S ribosomal subunit.

Involved in the binding of tRNA to the ribosomes. This is Small ribosomal subunit protein uS10 from Ruegeria pomeroyi (strain ATCC 700808 / DSM 15171 / DSS-3) (Silicibacter pomeroyi).